A 129-amino-acid chain; its full sequence is Small ribosomal subunit protein uS11 (129 aa).

Belongs to the universal ribosomal protein uS11 family. Part of the 30S ribosomal subunit. Interacts with proteins S7 and S18. Binds to IF-3.

In terms of biological role, located on the platform of the 30S subunit, it bridges several disparate RNA helices of the 16S rRNA. Forms part of the Shine-Dalgarno cleft in the 70S ribosome. The protein is Small ribosomal subunit protein uS11 of Maridesulfovibrio salexigens (strain ATCC 14822 / DSM 2638 / NCIMB 8403 / VKM B-1763) (Desulfovibrio salexigens).